We begin with the raw amino-acid sequence, 197 residues long: MTTLQERVAAHFAESIRAKQEAGKVLVEPTVQAAELMLQCLMNDGKILACGNGGSAADAQHFAAEMTGRFEKERMELAAVALTTDTSALTAIGNDYGFDHVFSKQVRALGRAGDVLVGISTSGNSANVIEAVKAAHERDMHVIALTGRDGGKIAAILKDTDVLLNVPHPRTARIQENHILLIHAMCDCIDSVLLEGM.

An SIS domain is found at 37 to 197 (MLQCLMNDGK…CIDSVLLEGM (161 aa)). Residue 52 to 54 (NGG) coordinates substrate. Positions 61 and 65 each coordinate Zn(2+). Substrate contacts are provided by residues glutamate 65, 94-95 (ND), 120-122 (STS), serine 125, and glutamine 175. Residues glutamine 175 and histidine 183 each coordinate Zn(2+).

The protein belongs to the SIS family. GmhA subfamily. In terms of assembly, homotetramer. Zn(2+) is required as a cofactor.

It is found in the cytoplasm. The catalysed reaction is 2 D-sedoheptulose 7-phosphate = D-glycero-alpha-D-manno-heptose 7-phosphate + D-glycero-beta-D-manno-heptose 7-phosphate. It functions in the pathway carbohydrate biosynthesis; D-glycero-D-manno-heptose 7-phosphate biosynthesis; D-glycero-alpha-D-manno-heptose 7-phosphate and D-glycero-beta-D-manno-heptose 7-phosphate from sedoheptulose 7-phosphate: step 1/1. Its pathway is bacterial outer membrane biogenesis; LOS core biosynthesis. Functionally, catalyzes the isomerization of sedoheptulose 7-phosphate in D-glycero-D-manno-heptose 7-phosphate. This Neisseria meningitidis serogroup A / serotype 4A (strain DSM 15465 / Z2491) protein is Phosphoheptose isomerase.